Reading from the N-terminus, the 439-residue chain is Diaminopimelate decarboxylase (439 aa).

Position 66 is an N6-(pyridoxal phosphate)lysine (K66). Pyridoxal 5'-phosphate contacts are provided by residues G248 and 290-293; that span reads EPGR. Positions 293, 330, and 334 each coordinate substrate. The active-site Proton donor is C361. Substrate is bound by residues E362 and Y390. Y390 provides a ligand contact to pyridoxal 5'-phosphate.

Belongs to the Orn/Lys/Arg decarboxylase class-II family. LysA subfamily. Homodimer. Pyridoxal 5'-phosphate is required as a cofactor.

The enzyme catalyses meso-2,6-diaminopimelate + H(+) = L-lysine + CO2. It functions in the pathway amino-acid biosynthesis; L-lysine biosynthesis via DAP pathway; L-lysine from DL-2,6-diaminopimelate: step 1/1. Specifically catalyzes the decarboxylation of meso-diaminopimelate (meso-DAP) to L-lysine. This chain is Diaminopimelate decarboxylase, found in Halalkalibacterium halodurans (strain ATCC BAA-125 / DSM 18197 / FERM 7344 / JCM 9153 / C-125) (Bacillus halodurans).